The primary structure comprises 248 residues: Large ribosomal subunit protein uL4 (248 aa).

Disordered stretches follow at residues glycine 48 to arginine 96 and alanine 210 to alanine 248. Residues aspartate 233–alanine 248 show a composition bias toward basic and acidic residues.

The protein belongs to the universal ribosomal protein uL4 family. Part of the 50S ribosomal subunit.

Functionally, one of the primary rRNA binding proteins, this protein initially binds near the 5'-end of the 23S rRNA. It is important during the early stages of 50S assembly. It makes multiple contacts with different domains of the 23S rRNA in the assembled 50S subunit and ribosome. Its function is as follows. Forms part of the polypeptide exit tunnel. The protein is Large ribosomal subunit protein uL4 of Tropheryma whipplei (strain Twist) (Whipple's bacillus).